We begin with the raw amino-acid sequence, 110 residues long: UPF0060 membrane protein MT2717 (110 aa).

4 helical membrane passes run 6–26 (ILLF…VWQG), 32–52 (GWLW…FATL), 61–81 (VLAA…MALD), and 90–110 (VIGA…PRGH).

It belongs to the UPF0060 family.

The protein resides in the cell membrane. This chain is UPF0060 membrane protein MT2717, found in Mycobacterium tuberculosis (strain CDC 1551 / Oshkosh).